The chain runs to 260 residues: Ribosomal RNA small subunit methyltransferase J (260 aa).

S-adenosyl-L-methionine contacts are provided by residues 125-126 and Asp-179; that span reads ER. Positions 234–260 are disordered; the sequence is IDGPKPSHALDGKSSRYDIYPKKALKP. The span at 241-254 shows a compositional bias: basic and acidic residues; that stretch reads HALDGKSSRYDIYP.

It belongs to the methyltransferase superfamily. RsmJ family.

Its subcellular location is the cytoplasm. It carries out the reaction guanosine(1516) in 16S rRNA + S-adenosyl-L-methionine = N(2)-methylguanosine(1516) in 16S rRNA + S-adenosyl-L-homocysteine + H(+). Its function is as follows. Specifically methylates the guanosine in position 1516 of 16S rRNA. In Pseudomonas fluorescens (strain SBW25), this protein is Ribosomal RNA small subunit methyltransferase J.